The primary structure comprises 116 residues: Ribonuclease P protein component (116 aa).

Belongs to the RnpA family. As to quaternary structure, consists of a catalytic RNA component (M1 or rnpB) and a protein subunit.

The enzyme catalyses Endonucleolytic cleavage of RNA, removing 5'-extranucleotides from tRNA precursor.. Its function is as follows. RNaseP catalyzes the removal of the 5'-leader sequence from pre-tRNA to produce the mature 5'-terminus. It can also cleave other RNA substrates such as 4.5S RNA. The protein component plays an auxiliary but essential role in vivo by binding to the 5'-leader sequence and broadening the substrate specificity of the ribozyme. This chain is Ribonuclease P protein component, found in Leuconostoc citreum (strain KM20).